The sequence spans 552 residues: Pyrophosphate--fructose 6-phosphate 1-phosphotransferase subunit beta (552 aa).

G90 is a binding site for diphosphate. D184 contacts Mg(2+). Substrate is bound by residues 212–214 (TID), 251–252 (KY), 259–261 (MGR), E320, and 425–428 (YEGR). The active-site Proton acceptor is the D214.

It belongs to the phosphofructokinase type A (PFKA) family. PPi-dependent PFK group II subfamily. Clade 'Long' sub-subfamily. As to quaternary structure, tetramer of two alpha (regulatory) and two beta (catalytic) chains. Mg(2+) is required as a cofactor.

Its subcellular location is the cytoplasm. It catalyses the reaction beta-D-fructose 6-phosphate + diphosphate = beta-D-fructose 1,6-bisphosphate + phosphate + H(+). Its pathway is carbohydrate degradation; glycolysis; D-glyceraldehyde 3-phosphate and glycerone phosphate from D-glucose: step 3/4. Allosterically activated by fructose 2,6-bisphosphate. In terms of biological role, catalytic subunit of pyrophosphate--fructose 6-phosphate 1-phosphotransferase. Catalyzes the phosphorylation of D-fructose 6-phosphate, the first committing step of glycolysis. Uses inorganic phosphate (PPi) as phosphoryl donor instead of ATP like common ATP-dependent phosphofructokinases (ATP-PFKs), which renders the reaction reversible, and can thus function both in glycolysis and gluconeogenesis. In Ricinus communis (Castor bean), this protein is Pyrophosphate--fructose 6-phosphate 1-phosphotransferase subunit beta.